The sequence spans 336 residues: tRNA N6-adenosine threonylcarbamoyltransferase (336 aa).

2 residues coordinate Fe cation: His114 and His118. Substrate-binding positions include 136-140 (LVSGG), Asp169, Gly182, Asp186, and Asn275. Asp302 contacts Fe cation.

It belongs to the KAE1 / TsaD family. Requires Fe(2+) as cofactor.

Its subcellular location is the cytoplasm. The catalysed reaction is L-threonylcarbamoyladenylate + adenosine(37) in tRNA = N(6)-L-threonylcarbamoyladenosine(37) in tRNA + AMP + H(+). Its function is as follows. Required for the formation of a threonylcarbamoyl group on adenosine at position 37 (t(6)A37) in tRNAs that read codons beginning with adenine. Is involved in the transfer of the threonylcarbamoyl moiety of threonylcarbamoyl-AMP (TC-AMP) to the N6 group of A37, together with TsaE and TsaB. TsaD likely plays a direct catalytic role in this reaction. This Streptococcus agalactiae serotype V (strain ATCC BAA-611 / 2603 V/R) protein is tRNA N6-adenosine threonylcarbamoyltransferase.